A 336-amino-acid polypeptide reads, in one-letter code: MGAAGSSALARLGLPALPGPRWLGVAALGLAAVALGAVAWRRARPGRRRRLQQVGTVSELWIYPIKSCKGVSVDAAECTALGLRSGHLRDRFWLVIKEDGHMVTGRQEPQLVLVSITYEDDCLILRAPGMDQLVLPTKLLSSNKLHDCRVFGLDIQGRDCGDEAAQWFTSFLKTDAFRLVQFEKNMKARASNEIFPSLDKNYQVAYPDCSPVMILSEASLADLNTRMEKKVKINNFRPNIVVTGCSAFEEDTWDELLIGNVEMKKILACPRCIMTTVDPDTGVIDRKEPLETLKSYRLCDPSEKSIYKSSPLFGIYYSVEKIGSLKVGDPVYQMVQ.

Residues M1–L35 constitute a mitochondrion transit peptide. Glycyl lysine isopeptide (Lys-Gly) (interchain with G-Cter in ubiquitin) cross-links involve residues K138, K144, K173, K187, K287, and K294. The MOSC domain maps to A188–M334.

As to quaternary structure, component of a complex composed of cytochrome b5, NADH-cytochrome b5 reductase (CYB5R3) and MTARC2. The cofactor is Mo-molybdopterin. Post-translationally, ubiquitinated by PRKN during mitophagy, leading to its degradation and enhancement of mitophagy. Deubiquitinated by USP30.

The protein localises to the mitochondrion outer membrane. It is found in the peroxisome. It carries out the reaction N(omega)-hydroxy-L-arginine + 2 Fe(II)-[cytochrome b5] + 2 H(+) = L-arginine + 2 Fe(III)-[cytochrome b5] + H2O. Functionally, catalyzes the reduction of N-oxygenated molecules, acting as a counterpart of cytochrome P450 and flavin-containing monooxygenases in metabolic cycles. As a component of prodrug-converting system, reduces a multitude of N-hydroxylated prodrugs particularly amidoximes, leading to increased drug bioavailability. May be involved in mitochondrial N(omega)-hydroxy-L-arginine (NOHA) reduction, regulating endogenous nitric oxide levels and biosynthesis. Postulated to cleave the N-OH bond of N-hydroxylated substrates in concert with electron transfer from NADH to cytochrome b5 reductase then to cytochrome b5, the ultimate electron donor that primes the active site for substrate reduction. The protein is Mitochondrial amidoxime reducing component 2 (MTARC2) of Bos taurus (Bovine).